The sequence spans 551 residues: MQTYQGIIVDAIYRRKFKGEIAVEHGKIISIEEKEHDIEQYILPGLVDAHVHIESSMTVPSVFARMAVARGTVAVVSDPHEIANVMGEEGIDYMLEDARKAPLKVFFGVPSCVPATPFESAGAVLDAEAVDRLLAREDLHYLSEMMNFPGVVMEFPEVIAKLESAKKYGKNIDGHAPGLNGTDLQKYVGAGISTDHESFAYEEAVEKIKLGMNILIREGSSARNFDTLYKLIDEYPESVMLCTDDSHPDTLIYEGHIDKLLRRGQEKGLDIYNLIRAAVINPVEHYGLNVGLLREGDPADFIIVDDLKAFNVLKTFIDGSCVYNDGKVLFSVEQAPAKNVFNRNKISVDDVKLAMPASGNNGEQMKKIRVIVAQDGELVTGQELALPKVENGNLISDPARDILKMVVLSRYADDPVQIGFIKNIGLKKGAIASSIAHDSHNIIAVGATDEDIVGAVNRLVENRGGIVVGTADNLIDLPLEVSGLMSTLDGKEVAVRYEQLNEEARKLGTSLMSPFMTLSFMSLLVIPELKLGDKGLFDVTKFEFVELFAGE.

The protein belongs to the metallo-dependent hydrolases superfamily. Adenine deaminase family. Requires Mn(2+) as cofactor.

The enzyme catalyses adenine + H2O + H(+) = hypoxanthine + NH4(+). This Methanosarcina barkeri (strain Fusaro / DSM 804) protein is Adenine deaminase.